The following is a 388-amino-acid chain: Probable proton-coupled zinc antiporter SLC30A3 (388 aa).

A disordered region spans residues 1–46 (MEPSPAAGGLETTRLVSPRDRGGAGGSLRLKSLFTEPSEPLPEESK). Over 1–75 (MEPSPAAGGL…TPERLHARRQ (75 aa)) the chain is Cytoplasmic. Residues 76-96 (LYAACAVCFVFMAGEVVGGYL) traverse the membrane as a helical segment. Residues 97 to 105 (AHSLAIMTD) are Lumenal-facing. Residues 106 to 126 (AAHLLADVGSMMGSLFSLWLS) form a helical membrane-spanning segment. Zn(2+)-binding residues include histidine 108 and aspartate 112. Residues 127–145 (TRPATRTMTFGWHRSETLG) lie on the Cytoplasmic side of the membrane. The chain crosses the membrane as a helical span at residues 146–166 (ALASVVSLWMVTGILLYLAFV). The Lumenal segment spans residues 167 to 177 (RLLHSDYHIEG). Residues 178–198 (GAMLLTASIAVCANLLMAFVL) form a helical membrane-spanning segment. Residues 199–235 (HQAGPPHSHGSRGAEYAPLEEGPEEPLPLGNTSVRAA) lie on the Cytoplasmic side of the membrane. A helical transmembrane segment spans residues 236 to 256 (FVHVLGDLLQSFGVLAASILI). Residues histidine 238 and aspartate 242 each contribute to the Zn(2+) site. At 257-264 (YFKPQYKA) the chain is on the lumenal side. The chain crosses the membrane as a helical span at residues 265-285 (ADPISTFLFSICALGSTAPTL). The Cytoplasmic segment spans residues 286-388 (RDVLRILMEG…CLRCQEPPQA (103 aa)). Tyrosine 357 participates in a covalent cross-link: Dityrosine (Tyr-Tyr) (interchain with Y-372). Residue tyrosine 372 forms a Dityrosine (Tyr-Tyr) (interchain with Y-357) linkage.

This sequence belongs to the cation diffusion facilitator (CDF) transporter (TC 2.A.4) family. SLC30A subfamily. Homodimer; dityrosine-linked. Homodimerization seems specific of the human protein and enhances the zinc transport efficiency. Interacts with TMEM163. Homodimerization through dityrosine bonds is stimulated by oxidative stress.

The protein resides in the cytoplasmic vesicle. It localises to the secretory vesicle. The protein localises to the synaptic vesicle membrane. Its subcellular location is the synapse. It is found in the synaptosome. The protein resides in the late endosome membrane. It localises to the lysosome membrane. The catalysed reaction is Zn(2+)(in) + 2 H(+)(out) = Zn(2+)(out) + 2 H(+)(in). Its function is as follows. Probable proton-coupled zinc ion antiporter mediating the import of zinc from cytoplasm into synaptic vesicles and participating to cellular zinc ion homeostasis in the brain. The sequence is that of Probable proton-coupled zinc antiporter SLC30A3 from Homo sapiens (Human).